The sequence spans 170 residues: Acireductone dioxygenase (170 aa).

4 residues coordinate Fe(2+): histidine 99, histidine 101, glutamate 105, and histidine 144. Positions 99, 101, 105, and 144 each coordinate Ni(2+).

It belongs to the acireductone dioxygenase (ARD) family. As to quaternary structure, monomer. Requires Fe(2+) as cofactor. The cofactor is Ni(2+).

It carries out the reaction 1,2-dihydroxy-5-(methylsulfanyl)pent-1-en-3-one + O2 = 3-(methylsulfanyl)propanoate + CO + formate + 2 H(+). It catalyses the reaction 1,2-dihydroxy-5-(methylsulfanyl)pent-1-en-3-one + O2 = 4-methylsulfanyl-2-oxobutanoate + formate + 2 H(+). It functions in the pathway amino-acid biosynthesis; L-methionine biosynthesis via salvage pathway; L-methionine from S-methyl-5-thio-alpha-D-ribose 1-phosphate: step 5/6. In terms of biological role, catalyzes 2 different reactions between oxygen and the acireductone 1,2-dihydroxy-3-keto-5-methylthiopentene (DHK-MTPene) depending upon the metal bound in the active site. Fe-containing acireductone dioxygenase (Fe-ARD) produces formate and 2-keto-4-methylthiobutyrate (KMTB), the alpha-ketoacid precursor of methionine in the methionine recycle pathway. Ni-containing acireductone dioxygenase (Ni-ARD) produces methylthiopropionate, carbon monoxide and formate, and does not lie on the methionine recycle pathway. The polypeptide is Acireductone dioxygenase (Bacillus cereus (strain ATCC 10987 / NRS 248)).